Consider the following 246-residue polypeptide: Large ribosomal subunit protein uL2 (246 aa).

The segment at 197 to 226 (SPYAHPHGGGSHPKGGTPVPKTAPPGQKVG) is disordered.

This sequence belongs to the universal ribosomal protein uL2 family. Part of the 50S ribosomal subunit. Forms a bridge to the 30S subunit in the 70S ribosome.

In terms of biological role, one of the primary rRNA binding proteins. Required for association of the 30S and 50S subunits to form the 70S ribosome, for tRNA binding and peptide bond formation. It has been suggested to have peptidyltransferase activity; this is somewhat controversial. Makes several contacts with the 16S rRNA in the 70S ribosome. The chain is Large ribosomal subunit protein uL2 from Pyrobaculum islandicum (strain DSM 4184 / JCM 9189 / GEO3).